A 468-amino-acid polypeptide reads, in one-letter code: 3-isopropylmalate dehydratase large subunit (468 aa).

[4Fe-4S] cluster is bound by residues cysteine 347, cysteine 407, and cysteine 410.

The protein belongs to the aconitase/IPM isomerase family. LeuC type 1 subfamily. Heterodimer of LeuC and LeuD. Requires [4Fe-4S] cluster as cofactor.

It catalyses the reaction (2R,3S)-3-isopropylmalate = (2S)-2-isopropylmalate. Its pathway is amino-acid biosynthesis; L-leucine biosynthesis; L-leucine from 3-methyl-2-oxobutanoate: step 2/4. In terms of biological role, catalyzes the isomerization between 2-isopropylmalate and 3-isopropylmalate, via the formation of 2-isopropylmaleate. This Campylobacter jejuni subsp. jejuni serotype O:23/36 (strain 81-176) protein is 3-isopropylmalate dehydratase large subunit.